We begin with the raw amino-acid sequence, 243 residues long: MAGAHSTPLWSRHLLKAVLMVLVALFLVHSASAQSHREFASPGQQKKETSADILTQIGRSLKEMLDTWLGPETMHVISETLLQVMWAISSAISVACFALSGIAAQLLSALGLDGEQLTQGLKLSPSQVQTLLLWGAAALVIYWLLSLLLGLVLALLGRILGGLKLVLFVAGFVALVRSVPDPSTRALMLLALLTLFALLSRLTGSRSSGSHLEAKVRGLERQIEELRGRQRRAAKMPRSMEEE.

The first 33 residues, 1–33 (MAGAHSTPLWSRHLLKAVLMVLVALFLVHSASA), serve as a signal peptide directing secretion. At 34-83 (QSHREFASPGQQKKETSADILTQIGRSLKEMLDTWLGPETMHVISETLLQ) the chain is on the lumenal side. Residues 84 to 104 (VMWAISSAISVACFALSGIAA) form a helical membrane-spanning segment. Topologically, residues 105-135 (QLLSALGLDGEQLTQGLKLSPSQVQTLLLWG) are cytoplasmic. Residues 136-156 (AAALVIYWLLSLLLGLVLALL) traverse the membrane as a helical segment. Over 157 to 185 (GRILGGLKLVLFVAGFVALVRSVPDPSTR) the chain is Lumenal. The helical transmembrane segment at 186–205 (ALMLLALLTLFALLSRLTGS) threads the bilayer. The Cytoplasmic portion of the chain corresponds to 206–243 (RSSGSHLEAKVRGLERQIEELRGRQRRAAKMPRSMEEE).

As to quaternary structure, homooligomer. Interacts with CRYAB; in the cellular response to DNA damage.

It localises to the nucleus outer membrane. The protein resides in the endoplasmic reticulum membrane. The protein localises to the sarcoplasmic reticulum membrane. It catalyses the reaction K(+)(in) = K(+)(out). It carries out the reaction Ca(2+)(in) = Ca(2+)(out). Functions as a voltage-gated monoatomic cation channel permeable to both potassium and calcium. Plays a role in the cellular response to DNA damage. This is Voltage-gated monoatomic cation channel TMEM109 from Mus musculus (Mouse).